Consider the following 556-residue polypeptide: Formate--tetrahydrofolate ligase (556 aa).

65–72 provides a ligand contact to ATP; sequence TPAGEGKS.

It belongs to the formate--tetrahydrofolate ligase family.

It catalyses the reaction (6S)-5,6,7,8-tetrahydrofolate + formate + ATP = (6R)-10-formyltetrahydrofolate + ADP + phosphate. It functions in the pathway one-carbon metabolism; tetrahydrofolate interconversion. The sequence is that of Formate--tetrahydrofolate ligase from Streptococcus pneumoniae (strain 70585).